An 874-amino-acid chain; its full sequence is Coatomer subunit gamma-1 (874 aa).

A compositionally biased stretch (basic and acidic residues) spans 1 to 11 (MLKKFDKKDEE). The disordered stretch occupies residues 1-21 (MLKKFDKKDEESGGGSNPFQH). HEAT repeat units follow at residues 64–101 (TEAT…IAED), 283–320 (KELA…KHPS), 322–355 (VTAC…GSES), and 356–392 (SIDR…KYPR). The residue at position 594 (threonine 594) is a Phosphothreonine. Positions 609-874 (RQEIFQEQLA…PVDIILASVG (266 aa)) are interaction with ZNF289/ARFGAP2.

This sequence belongs to the COPG family. As to quaternary structure, oligomeric complex that consists of at least the alpha, beta, beta', gamma, delta, epsilon and zeta subunits. Interacts with ZNF289/ARFGAP2 through its C-terminal appendage domain. Interacts with EGFR upon EGF treatment; interaction is essential for regulation of EGF-dependent nuclear transport of EGFR by retrograde trafficking from the Golgi to the ER. The coatomer interacts with KDEL receptors; the interaction is important for retrograde trafficking of KDEL-bearing proteins from the Golgi to the endoplasmic reticulum. Interacts with COPB1. Interacts with TMED10 (via C-terminus). Interacts with TMED2, TMED3, TMED7 and TMED9.

It is found in the cytoplasm. It localises to the golgi apparatus membrane. Its subcellular location is the cytoplasmic vesicle. The protein resides in the COPI-coated vesicle membrane. Functionally, the coatomer is a cytosolic protein complex that binds to dilysine motifs and reversibly associates with Golgi non-clathrin-coated vesicles, which further mediate biosynthetic protein transport from the ER, via the Golgi up to the trans Golgi network. Coatomer complex is required for budding from Golgi membranes, and is essential for the retrograde Golgi-to-ER transport of dilysine-tagged proteins. In mammals, the coatomer can only be recruited by membranes associated to ADP-ribosylation factors (ARFs), which are small GTP-binding proteins; the complex also influences the Golgi structural integrity, as well as the processing, activity, and endocytic recycling of LDL receptors. Required for limiting lipid storage in lipid droplets. Involved in lipid homeostasis by regulating the presence of perilipin family members PLIN2 and PLIN3 at the lipid droplet surface and promoting the association of adipocyte triglyceride lipase (PNPLA2) with the lipid droplet surface to mediate lipolysis. This chain is Coatomer subunit gamma-1 (COPG1), found in Homo sapiens (Human).